A 186-amino-acid polypeptide reads, in one-letter code: Ribosome-recycling factor (186 aa).

Belongs to the RRF family.

It is found in the cytoplasm. In terms of biological role, responsible for the release of ribosomes from messenger RNA at the termination of protein biosynthesis. May increase the efficiency of translation by recycling ribosomes from one round of translation to another. The polypeptide is Ribosome-recycling factor (Methylibium petroleiphilum (strain ATCC BAA-1232 / LMG 22953 / PM1)).